The chain runs to 131 residues: Small ribosomal subunit protein uS8 (131 aa).

The protein belongs to the universal ribosomal protein uS8 family. In terms of assembly, part of the 30S ribosomal subunit. Contacts proteins S5 and S12.

Its function is as follows. One of the primary rRNA binding proteins, it binds directly to 16S rRNA central domain where it helps coordinate assembly of the platform of the 30S subunit. The chain is Small ribosomal subunit protein uS8 from Shewanella amazonensis (strain ATCC BAA-1098 / SB2B).